Reading from the N-terminus, the 767-residue chain is 5-methyltetrahydropteroyltriglutamate--homocysteine methyltransferase (767 aa).

5-methyltetrahydropteroyltri-L-glutamate contacts are provided by residues 17–20 and K117; that span reads RELK. L-homocysteine is bound by residues 441 to 443 and E494; that span reads IGS. L-methionine is bound by residues 441–443 and E494; that span reads IGS. Residues 525 to 526 and W571 each bind 5-methyltetrahydropteroyltri-L-glutamate; that span reads RC. D609 provides a ligand contact to L-homocysteine. Position 609 (D609) interacts with L-methionine. Position 615 (E615) interacts with 5-methyltetrahydropteroyltri-L-glutamate. Zn(2+) is bound by residues H652, C654, and E676. H705 functions as the Proton donor in the catalytic mechanism. C737 lines the Zn(2+) pocket.

Belongs to the vitamin-B12 independent methionine synthase family. Zn(2+) serves as cofactor.

It catalyses the reaction 5-methyltetrahydropteroyltri-L-glutamate + L-homocysteine = tetrahydropteroyltri-L-glutamate + L-methionine. It functions in the pathway amino-acid biosynthesis; L-methionine biosynthesis via de novo pathway; L-methionine from L-homocysteine (MetE route): step 1/1. Functionally, catalyzes the transfer of a methyl group from 5-methyltetrahydrofolate to homocysteine resulting in methionine formation. The chain is 5-methyltetrahydropteroyltriglutamate--homocysteine methyltransferase from Bifidobacterium longum subsp. infantis (strain ATCC 15697 / DSM 20088 / JCM 1222 / NCTC 11817 / S12).